We begin with the raw amino-acid sequence, 2359 residues long: Neuron navigator 3 (2359 aa).

In terms of domain architecture, Calponin-homology (CH) spans 77 to 184 (IEDSKIYTDW…LFFSLSRYKQ (108 aa)). 4 stretches are compositionally biased toward polar residues: residues 204–226 (THTAPQSEASQAKTQQDMQSSLT), 233–243 (SKHSGIATSQK), 257–279 (ASSSNKAQGASNLNRRSQSFNSI), and 300–317 (QPSSGINGNTQPPSTSGQ). 2 disordered regions span residues 204–623 (THTA…QQQH) and 641–660 (ENEGTSLPPADSCTSPTKMD). A compositionally biased stretch (low complexity) spans 318-329 (PPASAIPSPSAS). Positions 335 to 352 (KSMNVKHSATSTMLTVKQ) are enriched in polar residues. Low complexity-rich tracts occupy residues 353-363 (PSPATSPTPSS) and 427-439 (NSGLNSGGSTNSS). Residues 465 to 491 (PKEKEEKTRDKNKACAEKSGKEEKDQV) are compositionally biased toward basic and acidic residues. Positions 522–536 (IPSSSGIPKPGSKVP) are enriched in low complexity. The span at 592 to 623 (ASPSSSCVMQVTHSSGQSPGNGAVQLPQQQQH) shows a compositional bias: polar residues. The stretch at 680–708 (EARRMRTVKNIADLRQNLEETMSSLRGTQ) forms a coiled coil. Disordered regions lie at residues 878–1315 (ADSW…SPLF), 1413–1472 (LSES…AMSS), 1653–1758 (GALN…KPSQ), and 1829–1855 (ETGNTAKPARPPSDSSSTASSSSSRQS). Low complexity-rich tracts occupy residues 883-896 (DSSSVSSGLSDTLD) and 904-916 (NTTSSISSYSNIT). Over residues 917-926 (VPSRKNTQLK) the composition is skewed to polar residues. Basic and acidic residues predominate over residues 943 to 960 (EELKKAEGDCDSHGDGAA). 2 stretches are compositionally biased toward polar residues: residues 978–989 (QKASLSVSQTGS) and 997–1013 (QGGTPATARQKTSTSAL). Positions 1017-1029 (GKTDDAKASEKGK) are enriched in basic and acidic residues. Low complexity-rich tracts occupy residues 1077–1095 (GASTMITSSGATITSGSAT) and 1160–1173 (SSTSSIDSNVSSKS). A compositionally biased stretch (polar residues) spans 1190 to 1199 (GRSSPVTVNQ). Composition is skewed to low complexity over residues 1209–1229 (VSDSESVSLSGSPKSSPTSAS), 1256–1266 (GAKAGGKSASA), and 1274–1285 (SSSVVLSPSTSL). Gly residues predominate over residues 1299-1308 (GSMGSAGGLS). Positions 1439–1448 (NQEEGKEWLR) are enriched in basic and acidic residues. Positions 1449 to 1461 (SHSTGGLQDTGNQ) are enriched in polar residues. Ser1462 and Ser1466 each carry phosphoserine. Positions 1462–1472 (SPLVSPSAMSS) are enriched in low complexity. Residues 1565–1656 (AEEKAHSEQI…AQAAIQGALN (92 aa)) adopt a coiled-coil conformation. Low complexity-rich tracts occupy residues 1675 to 1692 (SVSSINSATSHSSIGSGN) and 1749 to 1758 (SGSSSMKPSQ). A coiled-coil region spans residues 1768–1835 (EAEAEIILQL…LKAETGNTAK (68 aa)). Positions 1841–1855 (SDSSSTASSSSSRQS) are enriched in low complexity.

This sequence belongs to the Nav/unc-53 family. In terms of tissue distribution, present in neurons from central and peripheral nervous systems (at protein level). Highly expressed in brain cortex, midbrain, cerebellum and hippocampus.

The protein localises to the nucleus outer membrane. Its function is as follows. Plays a role in cell migration. May be involved in neuron regeneration. May regulate IL2 production by T-cells. The polypeptide is Neuron navigator 3 (Nav3) (Mus musculus (Mouse)).